Reading from the N-terminus, the 307-residue chain is Beta-lactamase (307 aa).

An N-terminal signal peptide occupies residues 1–26 (MKLWFSTLKLKKAAAVLLFSCVALAG). A lipid anchor (N-palmitoyl cysteine) is attached at C27. C27 carries S-diacylglycerol cysteine lipidation. The Acyl-ester intermediate role is filled by S86. The active-site Proton acceptor is E182. Position 248 to 250 (248 to 250 (KTG)) interacts with substrate.

The protein belongs to the class-A beta-lactamase family. In terms of processing, large exopenicillinase is the primary secretion product; it can be converted to small exopenicillinase.

It is found in the cell membrane. It carries out the reaction a beta-lactam + H2O = a substituted beta-amino acid. This is Beta-lactamase (penP) from Bacillus licheniformis.